The sequence spans 184 residues: ATP synthase subunit b, chloroplastic (184 aa).

A helical transmembrane segment spans residues 26–48; that stretch reads ILATNLINLSVVLGVLIFFGKGV.

It belongs to the ATPase B chain family. As to quaternary structure, F-type ATPases have 2 components, F(1) - the catalytic core - and F(0) - the membrane proton channel. F(1) has five subunits: alpha(3), beta(3), gamma(1), delta(1), epsilon(1). F(0) has four main subunits: a(1), b(1), b'(1) and c(10-14). The alpha and beta chains form an alternating ring which encloses part of the gamma chain. F(1) is attached to F(0) by a central stalk formed by the gamma and epsilon chains, while a peripheral stalk is formed by the delta, b and b' chains.

The protein localises to the plastid. The protein resides in the chloroplast thylakoid membrane. Its function is as follows. F(1)F(0) ATP synthase produces ATP from ADP in the presence of a proton or sodium gradient. F-type ATPases consist of two structural domains, F(1) containing the extramembraneous catalytic core and F(0) containing the membrane proton channel, linked together by a central stalk and a peripheral stalk. During catalysis, ATP synthesis in the catalytic domain of F(1) is coupled via a rotary mechanism of the central stalk subunits to proton translocation. In terms of biological role, component of the F(0) channel, it forms part of the peripheral stalk, linking F(1) to F(0). The sequence is that of ATP synthase subunit b, chloroplastic from Calycanthus floridus var. glaucus (Eastern sweetshrub).